Here is a 190-residue protein sequence, read N- to C-terminus: MLLFTLCFFADQENGGKALASPPGNWQKADVTFDSNTAFESLVVSPDKKTVENVGVPKGVPDSPERFSSSPCVLGSPGFRSGKHFFEVKYGTQREWAVGLAGKSVKRKGYLRLVPEERIWQKGLWWLRRLETDSDKLQKGSGKIIVFLDYDEGKVIFDLDGEVTTIQANFNGEEVVPFYYIGARVSLANL.

The signal sequence occupies residues 1–20; sequence MLLFTLCFFADQENGGKALA. Residues 21–127 enclose the B30.2/SPRY domain; the sequence is SPPGNWQKAD…RIWQKGLWWL (107 aa). A propeptide spanning residues 128–190 is cleaved from the precursor; that stretch reads RRLETDSDKL…IGARVSLANL (63 aa).

In terms of tissue distribution, expressed by the venom gland.

Its subcellular location is the secreted. In terms of biological role, neurotoxin that produces dose-dependent hypolocomotion and hyperalgesia in mice. May directly act on the central nervous system, as it is 6500-fold more potent when administered intracerebroventricularly than intraperitoneal. This is Ohanin from Ophiophagus hannah (King cobra).